We begin with the raw amino-acid sequence, 136 residues long: Small ribosomal subunit protein eS17A (136 aa).

The protein belongs to the eukaryotic ribosomal protein eS17 family. In terms of assembly, component of the small ribosomal subunit (SSU). Mature yeast ribosomes consist of a small (40S) and a large (60S) subunit. The 40S small subunit contains 1 molecule of ribosomal RNA (18S rRNA) and 33 different proteins (encoded by 57 genes). The large 60S subunit contains 3 rRNA molecules (25S, 5.8S and 5S rRNA) and 46 different proteins (encoded by 81 genes).

The protein localises to the cytoplasm. Functionally, component of the ribosome, a large ribonucleoprotein complex responsible for the synthesis of proteins in the cell. The small ribosomal subunit (SSU) binds messenger RNAs (mRNAs) and translates the encoded message by selecting cognate aminoacyl-transfer RNA (tRNA) molecules. The large subunit (LSU) contains the ribosomal catalytic site termed the peptidyl transferase center (PTC), which catalyzes the formation of peptide bonds, thereby polymerizing the amino acids delivered by tRNAs into a polypeptide chain. The nascent polypeptides leave the ribosome through a tunnel in the LSU and interact with protein factors that function in enzymatic processing, targeting, and the membrane insertion of nascent chains at the exit of the ribosomal tunnel. The sequence is that of Small ribosomal subunit protein eS17A from Saccharomyces cerevisiae (strain ATCC 204508 / S288c) (Baker's yeast).